The following is a 196-amino-acid chain: Protein GrpE (196 aa).

The interval 1 to 39 is disordered; sequence MSSKEQKTPEGQAPEEIIMDQHEEIEAVEPEASAEQVDP.

Belongs to the GrpE family. Homodimer.

The protein resides in the cytoplasm. Its function is as follows. Participates actively in the response to hyperosmotic and heat shock by preventing the aggregation of stress-denatured proteins, in association with DnaK and GrpE. It is the nucleotide exchange factor for DnaK and may function as a thermosensor. Unfolded proteins bind initially to DnaJ; upon interaction with the DnaJ-bound protein, DnaK hydrolyzes its bound ATP, resulting in the formation of a stable complex. GrpE releases ADP from DnaK; ATP binding to DnaK triggers the release of the substrate protein, thus completing the reaction cycle. Several rounds of ATP-dependent interactions between DnaJ, DnaK and GrpE are required for fully efficient folding. The sequence is that of Protein GrpE from Escherichia coli (strain SMS-3-5 / SECEC).